Here is a 495-residue protein sequence, read N- to C-terminus: Prenylcysteine oxidase 1-like (495 aa).

Residues 1–22 (MARAAPLLAVLATVLTTAAAGG) form the signal peptide. N-linked (GlcNAc...) asparagine glycosylation is found at asparagine 185 and asparagine 343.

The protein belongs to the prenylcysteine oxidase family. FAD is required as a cofactor.

It is found in the secreted. Likely to have oxidoreductase activity. Required in the mevalonate pathway to regulate prenylation and enhances the bactericidal activity of neutrophils. The chain is Prenylcysteine oxidase 1-like (Pcyox1l) from Mus musculus (Mouse).